The primary structure comprises 180 residues: Large ribosomal subunit protein uL5 (180 aa).

Belongs to the universal ribosomal protein uL5 family. Part of the 50S ribosomal subunit; part of the 5S rRNA/L5/L18/L25 subcomplex. Contacts the 5S rRNA and the P site tRNA. Forms a bridge to the 30S subunit in the 70S ribosome.

Its function is as follows. This is one of the proteins that bind and probably mediate the attachment of the 5S RNA into the large ribosomal subunit, where it forms part of the central protuberance. In the 70S ribosome it contacts protein S13 of the 30S subunit (bridge B1b), connecting the 2 subunits; this bridge is implicated in subunit movement. Contacts the P site tRNA; the 5S rRNA and some of its associated proteins might help stabilize positioning of ribosome-bound tRNAs. The chain is Large ribosomal subunit protein uL5 from Polynucleobacter necessarius subsp. necessarius (strain STIR1).